The following is a 219-amino-acid chain: PKHD-type hydroxylase Mmar10_1675 (219 aa).

The 95-residue stretch at 77–171 folds into the Fe2OG dioxygenase domain; sequence TLSRILVSRY…RVAVVGWVRS (95 aa). Fe cation contacts are provided by His95, Asp97, and His152. Position 162 (Arg162) interacts with 2-oxoglutarate.

Fe(2+) serves as cofactor. The cofactor is L-ascorbate.

The chain is PKHD-type hydroxylase Mmar10_1675 from Maricaulis maris (strain MCS10) (Caulobacter maris).